Consider the following 290-residue polypeptide: MASSKKVTLSVLSREQSEGVGARVRRSIGRPELKNLDPFLLFDEFKGGKPGGFPDHPHRGFETVSYLLEGGSMAHEDFCGHVGKMNPGDLQWMTAGRGILHAEMPCSEEPAHGLQLWVNLRRSEKMVAPQYQELKSEEIPKPTKDGVTVAVISGEALGIKSKVYTRTPTLYLDFKLDQGAKHSQPIPKGWTSFIYTISGDVYIGPDDAQQKIEPHHTAVLGEGDAVQLENKDPKRSHFVLIAGEPLREPVVQHGPFVMNTNEEISQAILDFRNAKNGFEGARTWKSKIGN.

Fe cation-binding residues include histidine 56, histidine 58, histidine 101, and glutamate 103.

This sequence belongs to the pirin family. As to quaternary structure, may interact with NF1/CTF1. Interacts with BCL3. Identified in a complex comprised of PIR, BLC3, NFKB1 and target DNA. Fe cation is required as a cofactor. In terms of tissue distribution, weakly expressed in bone marrow.

It is found in the nucleus. The protein resides in the cytoplasm. It carries out the reaction quercetin + O2 = 2-(3,4-dihydroxybenzoyloxy)-4,6-dihydroxybenzoate + CO. It functions in the pathway flavonoid metabolism; quercetin degradation. Transcriptional coregulator of NF-kappa-B which facilitates binding of NF-kappa-B proteins to target kappa-B genes in a redox-state-dependent manner. May be required for efficient terminal myeloid maturation of hematopoietic cells. Has quercetin 2,3-dioxygenase activity (in vitro). The protein is Pirin (Pir) of Mus musculus (Mouse).